The sequence spans 118 residues: Basic phospholipase A2 nigroxin B (118 aa).

Cystine bridges form between cysteine 11/cysteine 70, cysteine 25/cysteine 117, cysteine 27/cysteine 43, cysteine 42/cysteine 98, cysteine 49/cysteine 91, cysteine 59/cysteine 84, and cysteine 77/cysteine 89. Positions 26, 28, and 30 each coordinate Ca(2+). The active site involves histidine 46. A Ca(2+)-binding site is contributed by aspartate 47. The active site involves aspartate 92.

This sequence belongs to the phospholipase A2 family. Group I subfamily. D49 sub-subfamily. It depends on Ca(2+) as a cofactor. Expressed by the venom gland.

The protein resides in the secreted. The enzyme catalyses a 1,2-diacyl-sn-glycero-3-phosphocholine + H2O = a 1-acyl-sn-glycero-3-phosphocholine + a fatty acid + H(+). Its function is as follows. Snake venom phospholipase A2 (PLA2) that has only a weak enzymatic activity. It has a myotoxic activity in vivo (dystrophic effect). PLA2 catalyzes the calcium-dependent hydrolysis of the 2-acyl groups in 3-sn-phosphoglycerides. The protein is Basic phospholipase A2 nigroxin B of Micrurus nigrocinctus (Central American coral snake).